The primary structure comprises 376 residues: MENILLNKALLILEDGTKFYGNSIGAKGTSIGEVIFNTSITGYQEIITDPSYFNQIVAFTYPHIGNIGIEINNNESSKIQVKAVILYQTHNIISDFRNKLSFSRFLLLNNIIGISGIDTRKLTRLIRKSGTQYGYVSSEGTNINFKEIKSKIKIFLEKKNLDLVKLVTTKRKIIYKKKYIEKNFFYNIVAYDFGIKFSIIKNLINLGCRITLVPATTKSKYVISLNPDGILLSNGPGNPEIYKYAIRNIQCLLETKIPIFGICLGHQLLAIANGAKILKMKFGHHGSNHPVKDLETNKIIITSQNHDFAIDKSTLSKNIIITHISMFDQTLQGIKLINKPVFSFQGHPESSPGPKDALFLFKNFINLVKDYRLNKK.

The interval 1–183 (MENILLNKAL…IYKKKYIEKN (183 aa)) is CPSase. L-glutamine contacts are provided by S51, G235, and G237. A Glutamine amidotransferase type-1 domain is found at 187-374 (NIVAYDFGIK…INLVKDYRLN (188 aa)). Residue C263 is the Nucleophile of the active site. L-glutamine is bound by residues L264, Q267, N305, and F308. Catalysis depends on residues H347 and E349.

It belongs to the CarA family. Composed of two chains; the small (or glutamine) chain promotes the hydrolysis of glutamine to ammonia, which is used by the large (or ammonia) chain to synthesize carbamoyl phosphate. Tetramer of heterodimers (alpha,beta)4.

It catalyses the reaction hydrogencarbonate + L-glutamine + 2 ATP + H2O = carbamoyl phosphate + L-glutamate + 2 ADP + phosphate + 2 H(+). The enzyme catalyses L-glutamine + H2O = L-glutamate + NH4(+). It participates in amino-acid biosynthesis; L-arginine biosynthesis; carbamoyl phosphate from bicarbonate: step 1/1. It functions in the pathway pyrimidine metabolism; UMP biosynthesis via de novo pathway; (S)-dihydroorotate from bicarbonate: step 1/3. Small subunit of the glutamine-dependent carbamoyl phosphate synthetase (CPSase). CPSase catalyzes the formation of carbamoyl phosphate from the ammonia moiety of glutamine, carbonate, and phosphate donated by ATP, constituting the first step of 2 biosynthetic pathways, one leading to arginine and/or urea and the other to pyrimidine nucleotides. The small subunit (glutamine amidotransferase) binds and cleaves glutamine to supply the large subunit with the substrate ammonia. The sequence is that of Carbamoyl phosphate synthase small chain from Wigglesworthia glossinidia brevipalpis.